A 151-amino-acid polypeptide reads, in one-letter code: Small ribosomal subunit protein uS15 (151 aa).

The interval 1-20 (MARLHSGKRGSSGSTKPLRT) is disordered.

The protein belongs to the universal ribosomal protein uS15 family. In terms of assembly, part of the 30S ribosomal subunit.

The chain is Small ribosomal subunit protein uS15 from Methanococcus vannielii (strain ATCC 35089 / DSM 1224 / JCM 13029 / OCM 148 / SB).